Here is a 284-residue protein sequence, read N- to C-terminus: MAERGGESGAERGGDRGDFGRGFGGGRGGGRGRDRGPRGRGRRGGRASEETKWVPVTKLGRLVADNKITKLEQIYLHSLPVKEYQIIDHLVGPTLKDEVMKIMPVQKQTRAGQRTRFKAFVVVGDGNGHVGLGVKCSKEVATAIRGAIILAKLSVVPVRRGYWGNKIGKPHTVPCKVTGKCGSVTVRMVPAPRGSGIVAARVPKKVLQFAGIDDVFTSSRGSTKTLGNFVKATFDCLQKTYGFLTPEFWKETRFSRSPYQEHTDFLSTKAVSATKVITEGEDQA.

Over residues 1–19 (MAERGGESGAERGGDRGDF) the composition is skewed to basic and acidic residues. The segment at 1-51 (MAERGGESGAERGGDRGDFGRGFGGGRGGGRGRDRGPRGRGRRGGRASEET) is disordered. The segment covering 20 to 29 (GRGFGGGRGG) has biased composition (gly residues). Residues 95-158 (LKDEVMKIMP…ILAKLSVVPV (64 aa)) form the S5 DRBM domain.

This sequence belongs to the universal ribosomal protein uS5 family.

The polypeptide is Small ribosomal subunit protein uS5y/uS5u/uS5v (RPS2B) (Arabidopsis thaliana (Mouse-ear cress)).